Here is an 80-residue protein sequence, read N- to C-terminus: MNSLNINLLYIAATIMMGLAAIGAAIGIGILGGKFLEGAARQPDLIPLLRSQFFIVMGLVDAIPMITVGLGLYILFAVAS.

Helical transmembrane passes span 11-31 (IAATIMMGLAAIGAAIGIGIL) and 54-74 (FIVMGLVDAIPMITVGLGLYI).

The protein belongs to the ATPase C chain family. In terms of assembly, F-type ATPases have 2 components, F(1) - the catalytic core - and F(0) - the membrane proton channel. F(1) has five subunits: alpha(3), beta(3), gamma(1), delta(1), epsilon(1). F(0) has three main subunits: a(1), b(2) and c(10-14). The alpha and beta chains form an alternating ring which encloses part of the gamma chain. F(1) is attached to F(0) by a central stalk formed by the gamma and epsilon chains, while a peripheral stalk is formed by the delta and b chains.

It localises to the cell membrane. Its function is as follows. F(1)F(0) ATP synthase produces ATP from ADP in the presence of a proton or sodium gradient. F-type ATPases consist of two structural domains, F(1) containing the extramembraneous catalytic core and F(0) containing the membrane proton channel, linked together by a central stalk and a peripheral stalk. During catalysis, ATP synthesis in the catalytic domain of F(1) is coupled via a rotary mechanism of the central stalk subunits to proton translocation. Key component of the F(0) channel; it plays a direct role in translocation across the membrane. A homomeric c-ring of between 10-14 subunits forms the central stalk rotor element with the F(1) delta and epsilon subunits. In Baumannia cicadellinicola subsp. Homalodisca coagulata, this protein is ATP synthase subunit c.